We begin with the raw amino-acid sequence, 129 residues long: MVDFKVVLSDPKTGLSYKIDAAGAAAGALLGKKIGTEVDGAPFGMSGYKITITGGSDKTGTPARPDLPGNGRRGLLISDGFGFNATHNGERRRKSQRGNEIAADFVQVNAKITVYGEKPVTEIFAAAAE.

This sequence belongs to the eukaryotic ribosomal protein eS6 family.

In Methanocorpusculum labreanum (strain ATCC 43576 / DSM 4855 / Z), this protein is Small ribosomal subunit protein eS6.